A 104-amino-acid chain; its full sequence is Large ribosomal subunit protein bL21 (104 aa).

It belongs to the bacterial ribosomal protein bL21 family. In terms of assembly, part of the 50S ribosomal subunit. Contacts protein L20.

This protein binds to 23S rRNA in the presence of protein L20. The protein is Large ribosomal subunit protein bL21 of Streptococcus agalactiae serotype Ia (strain ATCC 27591 / A909 / CDC SS700).